Consider the following 935-residue polypeptide: Transmembrane channel-like protein 1 (935 aa).

2 disordered regions span residues 1-21 (MPRH…DEGK) and 37-204 (ERGK…LGSL). Composition is skewed to basic and acidic residues over residues 37 to 47 (ERGKIKQASRD), 54 to 79 (RNGE…EKKH), 109 to 136 (DKSS…EKDV), 152 to 163 (NHEKTKQHLKEE), and 172 to 184 (PETT…KSES). Helical transmembrane passes span 303-340 (SSVA…MGKP), 392-423 (RMPL…ANEE), 480-510 (LTRF…VRRS), 523-550 (WWER…ISTL), 555-589 (PRIA…QLKR), 633-670 (WETM…VRFL), 690-710 (VSGN…GAFY), 714-736 (LPAL…VMCC), 751-774 (NFYM…TIVS), and 818-851 (LVLP…KKKL). Over residues 874–886 (EQARKAGEQRRNS) the composition is skewed to basic and acidic residues. A disordered region spans residues 874-935 (EQARKAGEQR…QQPQKNSKKR (62 aa)). Composition is skewed to polar residues over residues 899–919 (SHVS…TSSG) and 926–935 (QQPQKNSKKR).

The protein belongs to the TMC family. Interacts specifically with isoform CD3 of PCDH15A (via cytoplasmic domain). As to expression, in adults, expression is restricted to the hair cells of inner ear and lateral line organ. Expressed at higher levels in the larval lateral-line neuromasts than in the larval inner ear. Expressed in the sensory hair cell patches of the ear at 4 days post fertilization (dpf).

The protein localises to the cell membrane. The catalysed reaction is Ca(2+)(in) = Ca(2+)(out). Pore-forming subunit of the mechanotransducer (MET) non-selective cation channel complex located at the tips of hair-cell stereocilia. Highly permeable to calcium and likely transports monovalent cations. This Danio rerio (Zebrafish) protein is Transmembrane channel-like protein 1.